We begin with the raw amino-acid sequence, 98 residues long: uncharacterized protein (98 aa).

The span at 19 to 31 (RRMSKRSKNKAKK) shows a compositional bias: basic residues. Residues 19–47 (RRMSKRSKNKAKKERVPVEDRPPTPMPTS) form a disordered region.

Belongs to the lymphocryptovirus BNLF2B family.

This is an uncharacterized protein from Epstein-Barr virus (strain AG876) (HHV-4).